The sequence spans 450 residues: MEGSKTSNNSTMQVSFVCQRCSQPLKLDTSFKILDRVTIQELTAPLLTTAQAKPGETQEEETNSGEEPFIETPRQDGVSRRFIPPARMMSTESANSFTLIGEASDGGTMENLSRRLKVTGDLFDIMSGQTDVDHPLCEECTDTLLDQLDTQLNVTENECQNYKRCLEILEQMNEDDSEQLQMELKELALEEERLIQELEDVEKNRKIVAENLEKVQAEAERLDQEEAQYQREYSEFKRQQLELDDELKSVENQMRYAQTQLDKLKKTNVFNATFHIWHSGQFGTINNFRLGRLPSVPVEWNEINAAWGQTVLLLHALANKMGLKFQRYRLVPYGNHSYLESLTDKSKELPLYCSGGLRFFWDNKFDHAMVAFLDCVQQFKEEVEKGETRFCLPYRMDVEKGKIEDTGGSGGSYSIKTQFNSEEQWTKALKFMLTNLKWGLAWVSSQFYNK.

An N-acetylmethionine modification is found at methionine 1. Phosphoserine occurs at positions 15 and 30. The tract at residues threonine 48–threonine 72 is disordered. Phosphoserine; by AMPK occurs at positions 90, 93, and 96. Residues threonine 108–serine 127 carry the BH3 motif. Residues leucine 112–cysteine 159 form an interaction with BCL2 and BCL2L1 isoform Bcl-X(L) region. At threonine 119 the chain carries Phosphothreonine; by DAPK1. Positions aspartate 142–phenylalanine 270 form a coiled coil. The segment at aspartate 245–lysine 450 is evolutionary conserved domain (ECD). Residues lysine 402 and lysine 437 each participate in a glycyl lysine isopeptide (Lys-Gly) (interchain with G-Cter in ubiquitin) cross-link. Residues tryptophan 425 to lysine 450 are required for membrane-association.

The protein belongs to the beclin family. As to quaternary structure, a homodimeric form is proposed to exist; this metastable form readily transits to ATG14- or UVRAG-containing complexes with BECN1:UVRAG being more stable than BECN1:ATG14. Component of the PI3K (PI3KC3/PI3K-III/class III phosphatidylinositol 3-kinase) complex the core of which is composed of the catalytic subunit PIK3C3, the regulatory subunit PIK3R4 and BECN1 associating with additional regulatory/auxiliary subunits to form alternative complex forms. Alternative complex forms containing a fourth regulatory subunit in a mutually exclusive manner are PI3K complex I (PI3KC3-C1) containing ATG14, and PI3K complex II (PI3KC3-C2) containing UVRAG. PI3KC3-C1 displays a V-shaped architecture with PIK3R4 serving as a bridge between PIK3C3 and the ATG14:BECN1 subcomplex. Both, PI3KC3-C1 and PI3KC3-C2, can associate with further regulatory subunits, such as RUBCN, SH3GLB1/Bif-1 and AMBRA1. PI3KC3-C1 probably associates with PIK3CB. Forms a complex with PPP2CA and AMBRA1; AMBRA1 and BECN1 components of the complex regulate MYC stability via different pathways. Component of the complex, at least composed of LRPPRC, BECN1 and BCL2; the interactions prevent BECN1 from forming an autophagy-inducing complex with PIK3C3. Interacts with AMBRA1, GOPC, GRID2. Interacts with BCL2 and BCL2L1 isoform Bcl-X(L); the interaction inhibits BECN1 function in promoting autophagy by interfering with the formation of the PI3K complex. Interacts with cytosolic HMGB1; inhibits the interaction of BECN1 and BCL2 leading to promotion of autophagy. Interacts with USP10, USP13, VMP1, DAPK1, RAB39A. Interacts with the poly-Gln domain of ATXN3; the interaction causes deubiquitination at Lys-402 and stabilizes BECN1. Interacts with SLAMF1. Interacts with TRIM5; the interaction causes activation of BECN1 by causing its dissociation from its inhibitors BCL2 and TAB2. Interacts with active ULK1 (phosphorylated on 'Ser-317') and MEFV simultaneously. Interacts with WDR81 and WDR91; negatively regulates the PI3 kinase/PI3K activity associated with endosomal membranes. Interacts with LAPTM4B; competes with EGFR for LAPTM4B binding; regulates EGFR activity. Interacts with TRIM50. Interacts with TRIM16. Interacts with ATG14; this interaction is increased in the absence of TMEM39A. Interacts with WASHC1; preventing interaction with AMBRA1 and the DCX(AMBRA1) complex and subsequent ubiquitination. Interacts with TRIM17. Interacts with BCL2L10/BCL-B (via BH1 domain). Interacts with SH3BGRL. Interacts with IRGM; enhancing BECN1-interacting partners and influencing the composition of the BECN1 complex. Interacts with ARMC3. Interacts with LRPPRC. (Microbial infection) Interacts with human cytomegalovirus/HHV-5 protein TRS1. In terms of assembly, (Microbial infection) Interacts with murine gammaherpesvirus 68 M11. As to quaternary structure, (Microbial infection) Interacts with herpes simplex virus 1 (HHV-1) protein ICP34.5; this interaction antagonizes the host autophagy response. (Microbial infection) Interacts with Epstein-Barr virus protein BHRF1; this interaction inhibits BECN1-mediated autophagy induction. Post-translationally, phosphorylation at Thr-119 by DAPK1 reduces its interaction with BCL2 and BCL2L1 and promotes induction of autophagy. In response to autophagic stimuli, phosphorylated at serine residues by AMPK in an ATG14-dependent manner, and this phosphorylation is critical for maximally efficient autophagy. Polyubiquitinated by NEDD4, both with 'Lys-11'- and 'Lys-63'-linkages. 'Lys-11'-linked polyubiquitination leads to degradation and is enhanced when the stabilizing interaction partner VPS34 is depleted. Deubiquitinated by USP10 and USP13, leading to stabilize the PIK3C3/VPS34-containing complexes. Polyubiquitinated at Lys-402 with 'Lys-48'-linkages. 'Lys-48'-linked polyubiquitination of Lys-402 leads to degradation. Deubiquitinated by ATXN3, leading to stabilization. Ubiquitinated at Lys-437 via 'Lys-63'-linkage by the DCX(AMBRA1) complex, thereby increasing the association between BECN1 and PIK3C3 to promote PIK3C3 activity. 'Lys-48'-linked ubiquitination by RNF216 leads to proteasomal degradation and autophagy inhibition. In terms of processing, proteolytically processed by caspases including CASP8 and CASP3; the C-terminal fragments lack autophagy-inducing capacity and are proposed to induce apoptosis. Thus the cleavage is proposed to be an determinant to switch from autophagy to apoptosis pathways affecting cellular homeostasis including viral infections and survival of tumor cells. Ubiquitous.

It localises to the cytoplasm. Its subcellular location is the golgi apparatus. The protein localises to the trans-Golgi network membrane. The protein resides in the endosome membrane. It is found in the endoplasmic reticulum membrane. It localises to the mitochondrion membrane. Its subcellular location is the endosome. The protein localises to the cytoplasmic vesicle. The protein resides in the autophagosome. It is found in the mitochondrion. It localises to the nucleus. In terms of biological role, plays a central role in autophagy. Acts as a core subunit of the PI3K complex that mediates formation of phosphatidylinositol 3-phosphate; different complex forms are believed to play a role in multiple membrane trafficking pathways: PI3KC3-C1 is involved in initiation of autophagosomes and PI3KC3-C2 in maturation of autophagosomes and endocytosis. Involved in regulation of degradative endocytic trafficking and required for the abscission step in cytokinesis, probably in the context of PI3KC3-C2. Essential for the formation of PI3KC3-C2 but not PI3KC3-C1 PI3K complex forms. Involved in endocytosis. May play a role in antiviral host defense. Beclin-1-C 35 kDa localized to mitochondria can promote apoptosis; it induces the mitochondrial translocation of BAX and the release of proapoptotic factors. Functionally, (Microbial infection) Protects against infection by a neurovirulent strain of Sindbis virus. This Homo sapiens (Human) protein is Beclin-1 (BECN1).